We begin with the raw amino-acid sequence, 540 residues long: Probable LRR receptor-like serine/threonine-protein kinase RPK1 (540 aa).

Positions 1 to 19 (MKLLGLVFLLFNLFMFSFS) are cleaved as a signal peptide. The Extracellular segment spans residues 20-198 (RKLLTESGGG…PGKSGLYPIE (179 aa)). 2 LRR repeats span residues 118 to 142 (LSEI…IWGL) and 144 to 169 (KLEI…VLRK). A helical transmembrane segment spans residues 199 to 219 (IASIVSASVIVFVLLVLVILF). The Cytoplasmic portion of the chain corresponds to 220-540 (IYTRKWKRNS…LLKRIQPSRL (321 aa)). T250 and T258 each carry phosphothreonine. One can recognise a Protein kinase domain in the interval 261–535 (FSNSNCIGHG…KQAVRLLKRI (275 aa)). ATP is bound by residues 267–275 (IGHGGFGST) and K289. Phosphotyrosine occurs at positions 334 and 372. The active-site Proton acceptor is D385. Y427 carries the phosphotyrosine modification. T435 is subject to Phosphothreonine.

The protein belongs to the protein kinase superfamily. Ser/Thr protein kinase family. As to expression, expressed in roots, stems, leaves, and flowers.

It is found in the cell membrane. It catalyses the reaction L-seryl-[protein] + ATP = O-phospho-L-seryl-[protein] + ADP + H(+). The catalysed reaction is L-threonyl-[protein] + ATP = O-phospho-L-threonyl-[protein] + ADP + H(+). Functionally, involved in the main abscisic acid-mediated (ABA) signaling pathway and in early ABA perception. Together with RPK2, required for pattern formation along the radial axis (e.g. the apical embryonic domain cell types that generate cotyledon primordia), and the apical-basal axis (e.g. differentiation of the basal pole during early embryogenesis). This chain is Probable LRR receptor-like serine/threonine-protein kinase RPK1 (RPK1), found in Arabidopsis thaliana (Mouse-ear cress).